We begin with the raw amino-acid sequence, 160 residues long: DNA topoisomerase small subunit (160 aa).

Part of the DNA topoisomerase complex made of gp39, gp52 and gp60. The cofactor is Mg(2+).

It carries out the reaction ATP-dependent breakage, passage and rejoining of double-stranded DNA.. Its function is as follows. Small subunit of the DNA topoisomerase that untwists superhelical DNA. Controls topological states of double-stranded DNA by transient breakage and subsequent rejoining of DNA strands. In Enterobacteria phage T4 (Bacteriophage T4), this protein is DNA topoisomerase small subunit (60).